Reading from the N-terminus, the 208-residue chain is Large ribosomal subunit protein uL3 (208 aa).

The interval glycine 116–alanine 148 is disordered.

This sequence belongs to the universal ribosomal protein uL3 family. Part of the 50S ribosomal subunit. Forms a cluster with proteins L14 and L19.

In terms of biological role, one of the primary rRNA binding proteins, it binds directly near the 3'-end of the 23S rRNA, where it nucleates assembly of the 50S subunit. The protein is Large ribosomal subunit protein uL3 of Streptococcus pneumoniae (strain Hungary19A-6).